Here is a 238-residue protein sequence, read N- to C-terminus: MRGIMKVFVLTGAGVSAESGLGTFRDKDGVWTKYDLNEVATPQGFARNPALVRDFYNARRANLAGARPNAAHDALAQLEAGLARRGGELFLCTQNVDDLHEKAGCRRVIHMHGELAVTRCHHCEATWPDTGPLKPDTVCAACARDGGARPHVVWFGEIPLFMDQIEDALSAADLFVSIGTSGSVYPAAGFVAEARAMGIATCEINLEPSANAYVFDEKVYGPATEVVPAWVERLLARL.

Residues 1-237 (MRGIMKVFVL…PAWVERLLAR (237 aa)) form the Deacetylase sirtuin-type domain. 12 to 31 (GAGVSAESGLGTFRDKDGVW) is an NAD(+) binding site. Positions 56 and 59 each coordinate substrate. Residue 94–97 (QNVD) participates in NAD(+) binding. The Proton acceptor role is filled by His112. Residues Cys120, Cys123, Cys139, and Cys142 each coordinate Zn(2+). NAD(+) contacts are provided by residues 179–181 (GTS), 205–207 (NLE), and Ala223.

Belongs to the sirtuin family. Class III subfamily. Zn(2+) is required as a cofactor.

Its subcellular location is the cytoplasm. The enzyme catalyses N(6)-acetyl-L-lysyl-[protein] + NAD(+) + H2O = 2''-O-acetyl-ADP-D-ribose + nicotinamide + L-lysyl-[protein]. It carries out the reaction N(6)-succinyl-L-lysyl-[protein] + NAD(+) + H2O = 2''-O-succinyl-ADP-D-ribose + nicotinamide + L-lysyl-[protein]. In terms of biological role, NAD-dependent lysine deacetylase and desuccinylase that specifically removes acetyl and succinyl groups on target proteins. Modulates the activities of several proteins which are inactive in their acylated form. The protein is NAD-dependent protein deacylase of Caulobacter vibrioides (strain ATCC 19089 / CIP 103742 / CB 15) (Caulobacter crescentus).